Here is a 569-residue protein sequence, read N- to C-terminus: MPFKISRQAYAETYGPTKGDRIRLADTDLILEVEQDHTHYGDEVKFGGGKVIRDGMGQSQQSRDNGVVDTVITNALILDWWGIVKADIGIKDGKISGIGKAGNPDTQEGVNIIVGASTEAIAGEGSIITAGAIDSHIHFICPQQIETALASGVTTMLGGGTGPATGTNATTCTPGAFHISRMLQSAEGFPVNLGFFGKGNATNKAALEEQVRAGACGLKLHEDWGTTPACIDSCLSVADQLDVQVCIHTDTLNEAGFVEDTIKAIKGRTIHTFHTEGAGGGHAPDIIKICGESNVIPSSTNPTRPFTLNTLEEHLDMLMVCHHLDPKIPEDVAFAESRIRRETIAAEDILHDLGAFSIIASDSQAMGRVGEVISRTFQTAHKMKVQRGALPEDNQRNDNHRLKRYISKVTINPAIAHGISAHVGSVEVGKLADLVLWKPGFFGIKPDLVVKGGCIAWAQMGDANASIPTPQPVHGRPMFSSFGKAISPTCLTFLSENAIDAGVPERLKLERTCAPVKDTRKISKQSMKLNDARPKIEVDPQTYEVFANGELLTCEPAESLPLAQRYLLL.

A Urease domain is found at 131-569 (GAIDSHIHFI…LPLAQRYLLL (439 aa)). Ni(2+) contacts are provided by H136, H138, and K219. K219 carries the N6-carboxylysine modification. H221 serves as a coordination point for substrate. 2 residues coordinate Ni(2+): H248 and H274. The active-site Proton donor is the H322. D362 serves as a coordination point for Ni(2+).

The protein belongs to the metallo-dependent hydrolases superfamily. Urease alpha subunit family. As to quaternary structure, heterotrimer of UreA (gamma), UreB (beta) and UreC (alpha) subunits. Three heterotrimers associate to form the active enzyme. Requires Ni cation as cofactor. In terms of processing, carboxylation allows a single lysine to coordinate two nickel ions.

Its subcellular location is the cytoplasm. It catalyses the reaction urea + 2 H2O + H(+) = hydrogencarbonate + 2 NH4(+). It participates in nitrogen metabolism; urea degradation; CO(2) and NH(3) from urea (urease route): step 1/1. The sequence is that of Urease subunit alpha from Prochlorococcus marinus (strain NATL1A).